We begin with the raw amino-acid sequence, 81 residues long: Cortexin-2 (81 aa).

The chain crosses the membrane as a helical span at residues Thr29–Phe49.

Belongs to the cortexin family.

It localises to the membrane. This is Cortexin-2 (Ctxn2) from Mus musculus (Mouse).